A 430-amino-acid polypeptide reads, in one-letter code: Mothers against decapentaplegic homolog 9 (430 aa).

Positions 16-140 (PAVKRLLGWK…YRRVETPVLP (125 aa)) constitute an MH1 domain. Residues Cys68, Cys113, Cys125, and His130 each contribute to the Zn(2+) site. The interval 186 to 222 (CPAPPSSPGHVFPQSPCPTSYPHSPGSPSESDSPYQH) is disordered. Polar residues predominate over residues 202 to 221 (CPTSYPHSPGSPSESDSPYQ). The 195-residue stretch at 236 to 430 (WCSVAYYELN…SPHNPISSVS (195 aa)) folds into the MH2 domain.

It belongs to the dwarfin/SMAD family. As to quaternary structure, interaction with the co-SMAD SMAD4. Interacts with PEBP2-alpha subunit. Interacts with RANBP3L. In terms of processing, phosphorylated on serine by BMP (bone morphogenetic proteins) type 1 receptor kinase and activin type I receptor-like kinases (ALK-2, ALK-3 and ALK-6).

It localises to the cytoplasm. The protein localises to the nucleus. Its function is as follows. Transcriptional modulator activated by BMP (bone morphogenetic proteins) type 1 receptor kinase. SMAD9 is a receptor-regulated SMAD (R-SMAD). Has been shown to be activated by activin type I receptor-like kinases (ALK-2, ALK-3, ALK-6) which stimulate heteromerization between SMAD9 and SMAD4. May play a role in osteoblast differentiation and maturation. In Mus musculus (Mouse), this protein is Mothers against decapentaplegic homolog 9 (Smad9).